The primary structure comprises 507 residues: MVTIRADEISNIIRERIEQYNREVTIVNTGTVLQVGDGIARIYGLDEVMAGELVEFDEGTIGIALNLESNNVGVVLMGDGLMIQEGSSVKATGKIAQIPVSEAYLGRVINALANPIDGRGKISASESRLIESPAPGIISRRSVYEPLQTGLIAIDSMIPIGRGQRELIIGDRQTGKTAVATDTILNQQGQNVICVYVAIGQKASSVAQVVTSLQERGAMEYTIVVAETADAPATLQYLAPYTGAALAEYFMYREQHTLIIYDDLSKQAQAYRQMSLLLRRPPGREAYPGDVFYLHSRLLERAAKLSSQLGEGSMTALPIVETQSGDVSAYIPTNVISITDGQIFLSADLFNAGIRPAINVGISVSRVGSAAQIKAMKQVAGKLKLELAQFAELEAFAQFSSDLDKATQNQLARGQRLRELLKQSQSAPLTVEEQIMTIYTGTNGYLDGLEIGQVRKFLVQLRTYLKTNKPQFQEIIASTKTLTAEAESFLKEGIQEQLERFLLQEKV.

ATP is bound at residue 170 to 177 (GDRQTGKT). Thr-257 is subject to Phosphothreonine.

This sequence belongs to the ATPase alpha/beta chains family. In terms of assembly, F-type ATPases have 2 components, CF(1) - the catalytic core - and CF(0) - the membrane proton channel. CF(1) has five subunits: alpha(3), beta(3), gamma(1), delta(1), epsilon(1). CF(0) has four main subunits: a, b, b' and c.

Its subcellular location is the plastid. The protein localises to the chloroplast thylakoid membrane. The enzyme catalyses ATP + H2O + 4 H(+)(in) = ADP + phosphate + 5 H(+)(out). Produces ATP from ADP in the presence of a proton gradient across the membrane. The alpha chain is a regulatory subunit. The chain is ATP synthase subunit alpha, chloroplastic from Capsella bursa-pastoris (Shepherd's purse).